A 792-amino-acid polypeptide reads, in one-letter code: Xaa-Pro dipeptidyl-peptidase (792 aa).

Active-site charge relay system residues include Ser-363, Asp-482, and His-513.

The protein belongs to the peptidase S15 family. Homodimer.

The protein localises to the cytoplasm. It carries out the reaction Hydrolyzes Xaa-Pro-|- bonds to release unblocked, N-terminal dipeptides from substrates including Ala-Pro-|-p-nitroanilide and (sequentially) Tyr-Pro-|-Phe-Pro-|-Gly-Pro-|-Ile.. Functionally, removes N-terminal dipeptides sequentially from polypeptides having unsubstituted N-termini provided that the penultimate residue is proline. In Lactobacillus delbrueckii subsp. bulgaricus (strain ATCC BAA-365 / Lb-18), this protein is Xaa-Pro dipeptidyl-peptidase.